The following is a 1219-amino-acid chain: Pheromone-regulated membrane protein 10 (1219 aa).

Over residues 1 to 11 the composition is skewed to basic and acidic residues; sequence MMRTQSDEHVA. Disordered regions lie at residues 1-273, 303-490, 503-533, and 555-713; these read MMRT…IERE, LASF…DPFT, HDDD…EDYV, and EGNK…RPVK. The segment covering 42–53 has biased composition (acidic residues); sequence DENDDGHDDSDE. Over residues 57–68 the composition is skewed to low complexity; sequence SVVIPTPSVVIV. Positions 104-115 are enriched in polar residues; it reads LKSPGTPTTYSP. The segment covering 136 to 155 has biased composition (low complexity); that stretch reads GSSLSSTTLMNTLLNSSGLG. 2 stretches are compositionally biased toward acidic residues: residues 159–171 and 219–231; these read TESE…DEEV and QEEE…DDDG. Basic and acidic residues-rich tracts occupy residues 259 to 273, 330 to 346, and 395 to 421; these read ADRA…IERE, DDQR…RREN, and LDRR…EKER. The span at 422–432 shows a compositional bias: basic residues; the sequence is QHHHHNHHHHH. The segment covering 435–446 has biased composition (polar residues); it reads ETGPNTGASSPF. Positions 448 to 470 are enriched in basic and acidic residues; it reads EEEKDREAEEAEILRDQARDLVN. The segment covering 565–577 has biased composition (low complexity); sequence TTVGDGTSTGDVS. Positions 598 to 615 are enriched in basic residues; it reads KSKTKTTQKLGLKKKKKE. The span at 616–641 shows a compositional bias: basic and acidic residues; sequence LLKIIEDQRKEKEENKKRPKWYDKSR. Positions 642–652 are enriched in low complexity; the sequence is STSPSPGGTPA. Basic residues predominate over residues 653–673; sequence PHHHHHIPGLHLHHHTKGHQR. A compositionally biased stretch (basic and acidic residues) spans 693-713; the sequence is GGDKPPDRPRSLRSEALRPVK. Helical transmembrane passes span 864-884, 888-908, 918-938, 945-965, 983-1003, 1021-1041, 1049-1069, 1075-1095, 1100-1120, and 1184-1204; these read PPWL…PYAF, WADI…QIIV, VFEV…GTIS, FCFA…YIVL, MFYA…GAVV, LDPL…ALVN, PSML…GANI, SSYL…NLYS, GLAF…GVAS, and LGFT…AATL.

It belongs to the ThrE exporter (TC 2.A.79) family.

It is found in the membrane. In Yarrowia lipolytica (strain CLIB 122 / E 150) (Yeast), this protein is Pheromone-regulated membrane protein 10.